A 450-amino-acid chain; its full sequence is Glutamyl-tRNA(Gln) amidotransferase subunit A, mitochondrial (450 aa).

Catalysis depends on charge relay system residues Lys47 and Ser122. The active-site Acyl-ester intermediate is the Ser146.

It belongs to the amidase family. GatA subfamily. In terms of assembly, subunit of the heterotrimeric GatFAB amidotransferase (AdT) complex, composed of A, B and F subunits.

The protein resides in the mitochondrion. The enzyme catalyses L-glutamyl-tRNA(Gln) + L-glutamine + ATP + H2O = L-glutaminyl-tRNA(Gln) + L-glutamate + ADP + phosphate + H(+). Allows the formation of correctly charged Gln-tRNA(Gln) through the transamidation of misacylated Glu-tRNA(Gln) in the mitochondria. The reaction takes place in the presence of glutamine and ATP through an activated gamma-phospho-Glu-tRNA(Gln). This is Glutamyl-tRNA(Gln) amidotransferase subunit A, mitochondrial from Candida albicans (strain SC5314 / ATCC MYA-2876) (Yeast).